The following is a 676-amino-acid chain: Potassium voltage-gated channel subfamily KQT member 1 (676 aa).

2 disordered regions span residues 1–28 and 62–84; these read MAAA…RGSA and APPA…PRPP. The Cytoplasmic portion of the chain corresponds to 1 to 120; that stretch reads MAAASSPPRA…YNFLERPTGW (120 aa). At Ser-27 the chain carries Phosphoserine; by PKA. The segment covering 62–73 has biased composition (pro residues); it reads APPASPAAPAAP. The chain crosses the membrane as a helical span at residues 121–142; that stretch reads KCFVYHFAVFLIVLVCLIFSVL. Residues 143-153 lie on the Extracellular side of the membrane; the sequence is STIEQYAALAT. Residues 154–176 traverse the membrane as a helical segment; it reads GTLFWMEIVLVVFFGTEYVVRLW. At 177–192 the chain is on the cytoplasmic side; the sequence is SAGCRSKYVGLWGRLR. A helical transmembrane segment spans residues 193–218; that stretch reads FARKPISIIDLIVVVASMVVLCVGSK. At 219–226 the chain is on the extracellular side; sequence GQVFATSA. A helical; Voltage-sensor membrane pass occupies residues 227–242; that stretch reads IRGIRFLQILRMLHVD. Residues 238-246 are interaction with KCNE3; sequence MLHVDRQGG. Residues 243-260 are Cytoplasmic-facing; it reads RQGGTWRLLGSVVFIHRQ. An a 1,2-diacyl-sn-glycero-3-phospho-(1D-myo-inositol-4,5-bisphosphate)-binding site is contributed by Gln-244. Residues 261 to 283 form a helical membrane-spanning segment; the sequence is ELITTLYIGFLGLIFSSYFVYLA. Topologically, residues 284-299 are extracellular; it reads EKDAVNESGRVEFGSY. N-linked (GlcNAc...) asparagine glycosylation occurs at Asn-289. The pore-forming intramembrane region spans 300 to 320; that stretch reads ADALWWGVVTVTTIGYGDKVP. Residues 321–322 lie on the Extracellular side of the membrane; the sequence is QT. Residues 323–348 form a helical membrane-spanning segment; it reads WVGKTIASCFSVFAISFFALPAGILG. Residues 349–676 lie on the Cytoplasmic side of the membrane; that stretch reads SGFALKVQQK…VPRRGPDEGS (328 aa). Residues 370–382 form an interaction with CALM region; the sequence is AAASLIQTAWRCY. Ser-407 and Ser-409 each carry phosphoserine. The interaction with CALM; calcium-dependent stretch occupies residues 515–529; sequence KVIRRMQYFVAKKKF. Residues 535–572 are interaction with KCNE1 C-terminus; it reads PYDVRDVIEQYSQGHLNLMVRIKELQRRLDQSIGKPSL. Positions 585-621 form a coiled coil; that stretch reads SNTIGARLNRVEDKVTQLDQRLALITDMLHQLLSLHG. Positions 588 to 616 are interaction with AKAP9; it reads IGARLNRVEDKVTQLDQRLALITDMLHQL. The segment at 589 to 620 is C-terminal assembly domain (tetramerization); it reads GARLNRVEDKVTQLDQRLALITDMLHQLLSLH. The disordered stretch occupies residues 620–676; it reads HGGSTPGSGGPPREGGAHITQPCGSGGSVDPELFLPSNTLPTYEQLTVPRRGPDEGS. Residues 623 to 632 show a composition bias toward gly residues; the sequence is STPGSGGPPR. Positions 655–664 are enriched in polar residues; sequence PSNTLPTYEQ.

It belongs to the potassium channel family. KQT (TC 1.A.1.15) subfamily. Kv7.1/KCNQ1 sub-subfamily. Tetramer. Heterotetramer with KCNE1; targets to the membrane raft. Interacts (via C-terminus) with calmodulin; forms a heterooctameric structure (with 4:4 KCNQ1:CALM stoichiometry); the interaction is calcium-independent, constitutive, participates in the proper assembly of a functional channel and also acts a calcium sensor. KCNQ1 channels interact more strongly with Ca(2+)-CALM than with apoCALM. Interacts with AKAP9; targets protein kinase A (PKA) catalytic and regulatory subunits and protein phosphatase 1 (PP1) to the KCNQ1-KCNE1 complex, allowing PKA-mediated phosphorylation and increase of delayed rectifier potassium channel activity. Interacts with KCNE2; forms a heterooligomer complex that targets to the membrane raft and leading to currents with an apparently instantaneous activation, a rapid deactivation process and a linear current-voltage relationship and decreases the amplitude of the outward current. Interacts with AP2M1; mediates estrogen-induced internalization via clathrin-coated vesicles. Interacts with NEDD4L; promotes internalization and decreases I(Ks) currents. Interacts with USP2; counteracts the NEDD4L-specific down-regulation of I(Ks) and restore plasma membrane localization. Heterotetramer with KCNQ5; has a voltage-gated potassium channel activity. Interacts with KCNE3; four KCNE3 molecules are bound to one KCNQ1 tetramer (4:4 KCNQ1:KCNE3 stoichiometry); alters membrane raft localization; affects KCNQ1 structure and gating properties. Interacts with KCNE4; impairs KCNQ1 localization in lipid rafts and inhibits voltage-gated potassium channel activity. Interacts with KCNE5; impairs KCNQ1 localization in lipid rafts and only conducts current upon strong and continued depolarization. Interacts with SLC5A3; forms coregulatory channel-transporter complexes that modulate Na(+)-coupled myo-inositol influx through the transporter. In terms of processing, phosphorylation at Ser-27 by PKA; increases delayed rectifier potassium channel activity of the KCNQ1-KCNE1 complex through a macromolecular complex that includes PKA, PP1, and the targeting protein AKAP9. Post-translationally, ubiquitinated by NEDD4L; promotes internalization. The ubiquitinylated form is internalized through a clathrin-mediated endocytosis by interacting with AP2M1 and is recycled back to the cell membrane via RAB4A and RAB11A. Deubiquitinated by USP2; counteracts the NEDD4L-specific down-regulation of I(Ks) and restores the membrane localization. As to expression, abundantly expressed in heart, pancreas, prostate, kidney, small intestine and peripheral blood leukocytes. Less abundant in placenta, lung, spleen, colon, thymus, testis and ovaries.

It is found in the cell membrane. The protein localises to the cytoplasmic vesicle membrane. It localises to the early endosome. The protein resides in the membrane raft. Its subcellular location is the endoplasmic reticulum. It is found in the basolateral cell membrane. The protein localises to the apical cell membrane. It carries out the reaction K(+)(in) = K(+)(out). With respect to regulation, PIP2 molecule is essential to activate KCNQ channels by inducing the coupling of the voltage-sensing domain (VSD) and the pore-forming domain (PD). Upon channel activation, PIP2 disrupts the VSD-calmodulin/CALM interactions, causing the release of CALM from the VSD which triggers the opening of the gate. Calcium potentiates KCNQ1 channel current through calcium-bound CALM. Calcium-bound CALM competes with PIP2 to stabilize the channel open state. Pore-forming subunit of the voltage-gated potassium (Kv) channel involved in the regulation of cardiomyocyte excitability and important in normal development and functions of myocardium, inner ear, stomach and colon. Associates with KCNE beta subunits that modulates current kinetics. Induces a voltage-dependent current by rapidly activating and slowly deactivating potassium-selective outward current. Also promotes a delayed voltage activated potassium current showing outward rectification characteristic. During beta-adrenergic receptor stimulation, participates in cardiac repolarization by associating with KCNE1 to form the I(Ks) cardiac potassium current that increases the amplitude and slows down the activation kinetics of outward potassium current I(Ks). Muscarinic agonist oxotremorine-M strongly suppresses KCNQ1/KCNE1 current. When associated with KCNE3, forms the potassium channel that is important for cyclic AMP-stimulated intestinal secretion of chloride ions. This interaction with KCNE3 is reduced by 17beta-estradiol, resulting in the reduction of currents. During conditions of increased substrate load, maintains the driving force for proximal tubular and intestinal sodium ions absorption, gastric acid secretion, and cAMP-induced jejunal chloride ions secretion. Allows the provision of potassium ions to the luminal membrane of the secretory canaliculus in the resting state as well as during stimulated acid secretion. When associated with KCNE2, forms a heterooligomer complex leading to currents with an apparently instantaneous activation, a rapid deactivation process and a linear current-voltage relationship and decreases the amplitude of the outward current. When associated with KCNE4, inhibits voltage-gated potassium channel activity. When associated with KCNE5, this complex only conducts current upon strong and continued depolarization. Also forms a heterotetramer with KCNQ5; has a voltage-gated potassium channel activity. Binds with phosphatidylinositol 4,5-bisphosphate. KCNQ1-KCNE2 channel associates with Na(+)-coupled myo-inositol symporter in the apical membrane of choroid plexus epithelium and regulates the myo-inositol gradient between blood and cerebrospinal fluid with an impact on neuron excitability. In terms of biological role, non-functional alone but modulatory when coexpressed with the full-length isoform 1. The chain is Potassium voltage-gated channel subfamily KQT member 1 from Homo sapiens (Human).